Reading from the N-terminus, the 466-residue chain is Small RNA degrading nuclease 2 (466 aa).

Residues 142-298 enclose the Exonuclease domain; sequence MIAIDCEMVL…HDAEAAMKLV (157 aa). The interval 426–466 is disordered; the sequence is EENNASSKKRKRENHSKGTRDRRRCKPLSRRKQRSNVKRRR. The span at 445–466 shows a compositional bias: basic residues; it reads RDRRRCKPLSRRKQRSNVKRRR.

This sequence belongs to the REXO1/REXO3 family.

The protein resides in the nucleus. Functionally, 3'-5' exonuclease degrading single-stranded small RNAs. The polypeptide is Small RNA degrading nuclease 2 (SDN2) (Arabidopsis thaliana (Mouse-ear cress)).